The primary structure comprises 319 residues: ATP-dependent 6-phosphofructokinase (319 aa).

G11 is an ATP binding site. Residue 21–25 (RAVVR) coordinates ADP. Residues 72 to 73 (RY) and 102 to 105 (GDGS) each bind ATP. D103 serves as a coordination point for Mg(2+). A substrate-binding site is contributed by 125–127 (TID). D127 serves as the catalytic Proton acceptor. R154 provides a ligand contact to ADP. Substrate-binding positions include R162 and 169–171 (MGR). ADP contacts are provided by residues 185–187 (GAE), R211, and 213–215 (KKH). Substrate contacts are provided by residues E222, R243, and 249–252 (HVQR).

It belongs to the phosphofructokinase type A (PFKA) family. ATP-dependent PFK group I subfamily. Prokaryotic clade 'B1' sub-subfamily. As to quaternary structure, homotetramer. Mg(2+) serves as cofactor.

It localises to the cytoplasm. The catalysed reaction is beta-D-fructose 6-phosphate + ATP = beta-D-fructose 1,6-bisphosphate + ADP + H(+). It functions in the pathway carbohydrate degradation; glycolysis; D-glyceraldehyde 3-phosphate and glycerone phosphate from D-glucose: step 3/4. Its activity is regulated as follows. Allosterically activated by ADP and other diphosphonucleosides, and allosterically inhibited by phosphoenolpyruvate. In terms of biological role, catalyzes the phosphorylation of D-fructose 6-phosphate to fructose 1,6-bisphosphate by ATP, the first committing step of glycolysis. The sequence is that of ATP-dependent 6-phosphofructokinase from Listeria innocua serovar 6a (strain ATCC BAA-680 / CLIP 11262).